The following is a 498-amino-acid chain: Membrane-bound lytic murein transglycosylase F (498 aa).

An N-terminal signal peptide occupies residues 1 to 29 (MFFKPDFRPRCAKWLIATGLFLMLGACVE). A non-LT domain region spans residues 30–267 (KPTTLERVKE…RLKDRYYGHV (238 aa)). An LT domain region spans residues 268-498 (DVLGYVGAYT…SSSSTDESPL (231 aa)). The active site involves glutamate 314. Residues 464–498 (VADGNLHVPGVDKTQPPVPPASPVPSSSSTDESPL) form a disordered region.

This sequence in the N-terminal section; belongs to the bacterial solute-binding protein 3 family. In the C-terminal section; belongs to the transglycosylase Slt family.

The protein resides in the cell outer membrane. The catalysed reaction is Exolytic cleavage of the (1-&gt;4)-beta-glycosidic linkage between N-acetylmuramic acid (MurNAc) and N-acetylglucosamine (GlcNAc) residues in peptidoglycan, from either the reducing or the non-reducing ends of the peptidoglycan chains, with concomitant formation of a 1,6-anhydrobond in the MurNAc residue.. In terms of biological role, murein-degrading enzyme that degrades murein glycan strands and insoluble, high-molecular weight murein sacculi, with the concomitant formation of a 1,6-anhydromuramoyl product. Lytic transglycosylases (LTs) play an integral role in the metabolism of the peptidoglycan (PG) sacculus. Their lytic action creates space within the PG sacculus to allow for its expansion as well as for the insertion of various structures such as secretion systems and flagella. The polypeptide is Membrane-bound lytic murein transglycosylase F (Pseudomonas syringae pv. syringae (strain B728a)).